Here is a 244-residue protein sequence, read N- to C-terminus: Phosphoadenosine 5'-phosphosulfate reductase (244 aa).

The active-site Nucleophile; cysteine thiosulfonate intermediate is Cys-239.

The protein belongs to the PAPS reductase family. CysH subfamily.

The protein localises to the cytoplasm. The enzyme catalyses [thioredoxin]-disulfide + sulfite + adenosine 3',5'-bisphosphate + 2 H(+) = [thioredoxin]-dithiol + 3'-phosphoadenylyl sulfate. It functions in the pathway sulfur metabolism; hydrogen sulfide biosynthesis; sulfite from sulfate: step 3/3. Catalyzes the formation of sulfite from phosphoadenosine 5'-phosphosulfate (PAPS) using thioredoxin as an electron donor. The protein is Phosphoadenosine 5'-phosphosulfate reductase of Salmonella dublin (strain CT_02021853).